The sequence spans 172 residues: Endoribonuclease YbeY (172 aa).

Zn(2+) is bound by residues histidine 136, histidine 140, and histidine 146.

Belongs to the endoribonuclease YbeY family. Requires Zn(2+) as cofactor.

Its subcellular location is the cytoplasm. In terms of biological role, single strand-specific metallo-endoribonuclease involved in late-stage 70S ribosome quality control and in maturation of the 3' terminus of the 16S rRNA. The chain is Endoribonuclease YbeY from Rickettsia canadensis (strain McKiel).